The following is a 176-amino-acid chain: NADH:riboflavin 5'-phosphate oxidoreductase (176 aa).

Its function is as follows. Provides the reduced form of flavin mononucleotide for the PIIA synthase reaction. The polypeptide is NADH:riboflavin 5'-phosphate oxidoreductase (snaC) (Streptomyces pristinaespiralis).